The sequence spans 264 residues: 3-methyl-2-oxobutanoate hydroxymethyltransferase (264 aa).

Aspartate 45 and aspartate 84 together coordinate Mg(2+). 3-methyl-2-oxobutanoate contacts are provided by residues 45–46 (DS), aspartate 84, and lysine 112. Glutamate 114 serves as a coordination point for Mg(2+). Glutamate 181 (proton acceptor) is an active-site residue.

Belongs to the PanB family. In terms of assembly, homodecamer; pentamer of dimers. Mg(2+) serves as cofactor.

It is found in the cytoplasm. The catalysed reaction is 3-methyl-2-oxobutanoate + (6R)-5,10-methylene-5,6,7,8-tetrahydrofolate + H2O = 2-dehydropantoate + (6S)-5,6,7,8-tetrahydrofolate. The protein operates within cofactor biosynthesis; (R)-pantothenate biosynthesis; (R)-pantoate from 3-methyl-2-oxobutanoate: step 1/2. In terms of biological role, catalyzes the reversible reaction in which hydroxymethyl group from 5,10-methylenetetrahydrofolate is transferred onto alpha-ketoisovalerate to form ketopantoate. The chain is 3-methyl-2-oxobutanoate hydroxymethyltransferase from Shewanella loihica (strain ATCC BAA-1088 / PV-4).